Here is a 364-residue protein sequence, read N- to C-terminus: Dihydroorotate dehydrogenase (quinone) (364 aa).

FMN contacts are provided by residues 61 to 65 (AGYDK) and Thr85. Residue Lys65 participates in substrate binding. Residue 110–114 (NRLGF) participates in substrate binding. Positions 139 and 170 each coordinate FMN. Asn170 is a substrate binding site. Catalysis depends on Ser173, which acts as the Nucleophile. Asn175 is a binding site for substrate. The FMN site is built by Lys215 and Ser243. Substrate is bound at residue 244 to 245 (NT). FMN contacts are provided by residues Gly266, Gly295, and 316 to 317 (YT).

The protein belongs to the dihydroorotate dehydrogenase family. Type 2 subfamily. In terms of assembly, monomer. FMN is required as a cofactor.

The protein resides in the cell membrane. It catalyses the reaction (S)-dihydroorotate + a quinone = orotate + a quinol. It functions in the pathway pyrimidine metabolism; UMP biosynthesis via de novo pathway; orotate from (S)-dihydroorotate (quinone route): step 1/1. Its function is as follows. Catalyzes the conversion of dihydroorotate to orotate with quinone as electron acceptor. This chain is Dihydroorotate dehydrogenase (quinone), found in Brucella abortus (strain S19).